The following is a 447-amino-acid chain: Phosphoglucosamine mutase (447 aa).

Catalysis depends on Ser-100, which acts as the Phosphoserine intermediate. Residues Ser-100, Asp-240, Asp-242, and Asp-244 each contribute to the Mg(2+) site. Ser-100 bears the Phosphoserine mark.

The protein belongs to the phosphohexose mutase family. It depends on Mg(2+) as a cofactor. In terms of processing, activated by phosphorylation.

The enzyme catalyses alpha-D-glucosamine 1-phosphate = D-glucosamine 6-phosphate. In terms of biological role, catalyzes the conversion of glucosamine-6-phosphate to glucosamine-1-phosphate. The chain is Phosphoglucosamine mutase from Clostridium botulinum (strain Alaska E43 / Type E3).